The following is a 122-amino-acid chain: Large ribosomal subunit protein uL14 (122 aa).

This sequence belongs to the universal ribosomal protein uL14 family. Part of the 50S ribosomal subunit. Forms a cluster with proteins L3 and L19. In the 70S ribosome, L14 and L19 interact and together make contacts with the 16S rRNA in bridges B5 and B8.

Its function is as follows. Binds to 23S rRNA. Forms part of two intersubunit bridges in the 70S ribosome. The polypeptide is Large ribosomal subunit protein uL14 (Sorangium cellulosum (strain So ce56) (Polyangium cellulosum (strain So ce56))).